The primary structure comprises 227 residues: Ribonuclease 3 (227 aa).

The RNase III domain maps to 4 to 133 (FEELEKLLDY…LIAAIYLDSD (130 aa)). Glu46 is a Mg(2+) binding site. Asp50 is an active-site residue. Mg(2+)-binding residues include Asn119 and Glu122. Glu122 is a catalytic residue. The region spanning 158–226 (DPKTALQEWA…ARELLHKLKL (69 aa)) is the DRBM domain.

Belongs to the ribonuclease III family. As to quaternary structure, homodimer. Mg(2+) is required as a cofactor.

The protein localises to the cytoplasm. The catalysed reaction is Endonucleolytic cleavage to 5'-phosphomonoester.. Functionally, digests double-stranded RNA. Involved in the processing of primary rRNA transcript to yield the immediate precursors to the large and small rRNAs (23S and 16S). Processes some mRNAs, and tRNAs when they are encoded in the rRNA operon. Processes pre-crRNA and tracrRNA of type II CRISPR loci if present in the organism. The chain is Ribonuclease 3 from Rickettsia bellii (strain OSU 85-389).